The sequence spans 215 residues: MHKDGVLIKGNREGINATIDMEKFSSFEDMLNMLIKKLSKGKHFYKGTTLILNINLSLIKKNDIKKLKESLLNEIELNEIIFEQLELEEESNKQTKIFNGVYEGKTKFIRRTVRSGQCLNYPGNIVIIGDVNSGAEVHAGGNIIVLGSLKGSVNAGNTGNKKSIIAAFLLEPEILKIADVITISPDGLEKPKYPEIAKVKDGTIIVEPYLANKYI.

The protein belongs to the MinC family. In terms of assembly, interacts with MinD and FtsZ.

Functionally, cell division inhibitor that blocks the formation of polar Z ring septums. Rapidly oscillates between the poles of the cell to destabilize FtsZ filaments that have formed before they mature into polar Z rings. Prevents FtsZ polymerization. This is Probable septum site-determining protein MinC from Clostridium botulinum (strain Alaska E43 / Type E3).